The sequence spans 164 residues: Phosphopantetheine adenylyltransferase (164 aa).

Ser11 contributes to the substrate binding site. ATP contacts are provided by residues 11-12 and His19; that span reads SF. Lys43, Ala76, and Arg90 together coordinate substrate. Residues 91-93, Glu101, and 126-132 contribute to the ATP site; these read GLR and YQHISSS.

Belongs to the bacterial CoaD family. In terms of assembly, homohexamer. Requires Mg(2+) as cofactor.

It localises to the cytoplasm. The enzyme catalyses (R)-4'-phosphopantetheine + ATP + H(+) = 3'-dephospho-CoA + diphosphate. It participates in cofactor biosynthesis; coenzyme A biosynthesis; CoA from (R)-pantothenate: step 4/5. Its function is as follows. Reversibly transfers an adenylyl group from ATP to 4'-phosphopantetheine, yielding dephospho-CoA (dPCoA) and pyrophosphate. The polypeptide is Phosphopantetheine adenylyltransferase (Streptococcus sanguinis (strain SK36)).